Consider the following 506-residue polypeptide: 26S proteasome non-ATPase regulatory subunit 5 (506 aa).

Belongs to the proteasome subunit S5B/HSM3 family. Interacts with PI31; this interaction is increased by PI31 ADP-ribosylation. Interacts with Rpt2.

Functionally, acts as a chaperone during the assembly of the 26S proteasome. The chain is 26S proteasome non-ATPase regulatory subunit 5 from Drosophila melanogaster (Fruit fly).